The primary structure comprises 499 residues: Thermostable carboxypeptidase 1 (499 aa).

The Peptidase M32 domain occupies 6–499 (QNETIKQILA…FVRWVKEKYL (494 aa)). The HPF signature appears at 238-240 (HPF). Positions 248 to 252 (DVRIT) match the DXRXT motif. Co(2+) is bound at residue His-269. Residues 269 to 273 (HEFGH) carry the HEXXH motif. Glu-270 serves as the catalytic Proton donor/acceptor. Residues His-273 and Glu-299 each contribute to the Co(2+) site. An HES/GQ motif is present at residues 298-301 (HESQ). The I/NRXXA/SD motif lies at 350–355 (IRTEAD). A GXXQDXHW motif is present at residues 405–412 (GILQDIHW).

It belongs to the peptidase M32 family. In terms of assembly, homodimer. Requires Co(2+) as cofactor. It depends on Mn(2+) as a cofactor.

It carries out the reaction Release of a C-terminal amino acid with broad specificity, except for -Pro.. EDTA and DTT reversibly abolish carboxypeptidase activity. In terms of biological role, broad specificity carboxypetidase that releases amino acids sequentially from the C-terminus, including neutral, aromatic, polar and basic residues, but not Pro, Gly, Asp and Glu. The polypeptide is Thermostable carboxypeptidase 1 (Pyrococcus furiosus (strain ATCC 43587 / DSM 3638 / JCM 8422 / Vc1)).